We begin with the raw amino-acid sequence, 425 residues long: Glutamyl-tRNA reductase (425 aa).

Substrate is bound by residues 49 to 52 (TCNR), serine 106, 111 to 113 (EPQ), and glutamine 117. Residue cysteine 50 is the Nucleophile of the active site. Residue 186-191 (GAGETI) participates in NADP(+) binding.

Belongs to the glutamyl-tRNA reductase family. As to quaternary structure, homodimer.

It catalyses the reaction (S)-4-amino-5-oxopentanoate + tRNA(Glu) + NADP(+) = L-glutamyl-tRNA(Glu) + NADPH + H(+). It participates in porphyrin-containing compound metabolism; protoporphyrin-IX biosynthesis; 5-aminolevulinate from L-glutamyl-tRNA(Glu): step 1/2. Its function is as follows. Catalyzes the NADPH-dependent reduction of glutamyl-tRNA(Glu) to glutamate 1-semialdehyde (GSA). The protein is Glutamyl-tRNA reductase of Saccharophagus degradans (strain 2-40 / ATCC 43961 / DSM 17024).